A 375-amino-acid chain; its full sequence is Succinyl-diaminopimelate desuccinylase (375 aa).

Histidine 66 contacts Zn(2+). Residue aspartate 68 is part of the active site. Position 99 (aspartate 99) interacts with Zn(2+). Glutamate 133 (proton acceptor) is an active-site residue. The Zn(2+) site is built by glutamate 134, glutamate 162, and histidine 348.

The protein belongs to the peptidase M20A family. DapE subfamily. As to quaternary structure, homodimer. Requires Zn(2+) as cofactor. It depends on Co(2+) as a cofactor.

It carries out the reaction N-succinyl-(2S,6S)-2,6-diaminopimelate + H2O = (2S,6S)-2,6-diaminopimelate + succinate. It functions in the pathway amino-acid biosynthesis; L-lysine biosynthesis via DAP pathway; LL-2,6-diaminopimelate from (S)-tetrahydrodipicolinate (succinylase route): step 3/3. Functionally, catalyzes the hydrolysis of N-succinyl-L,L-diaminopimelic acid (SDAP), forming succinate and LL-2,6-diaminopimelate (DAP), an intermediate involved in the bacterial biosynthesis of lysine and meso-diaminopimelic acid, an essential component of bacterial cell walls. This chain is Succinyl-diaminopimelate desuccinylase, found in Shigella boydii serotype 18 (strain CDC 3083-94 / BS512).